A 371-amino-acid polypeptide reads, in one-letter code: Queuine tRNA-ribosyltransferase (371 aa).

Aspartate 89 serves as the catalytic Proton acceptor. Residues 89 to 93 (DSGGF), aspartate 143, glutamine 185, and glycine 212 contribute to the substrate site. Positions 243-249 (GVGKPED) are RNA binding. Aspartate 262 serves as the catalytic Nucleophile. Positions 267–271 (TRNAR) are RNA binding; important for wobble base 34 recognition. Cysteine 300, cysteine 302, cysteine 305, and histidine 331 together coordinate Zn(2+).

The protein belongs to the queuine tRNA-ribosyltransferase family. Homodimer. Within each dimer, one monomer is responsible for RNA recognition and catalysis, while the other monomer binds to the replacement base PreQ1. Requires Zn(2+) as cofactor.

The enzyme catalyses 7-aminomethyl-7-carbaguanine + guanosine(34) in tRNA = 7-aminomethyl-7-carbaguanosine(34) in tRNA + guanine. Its pathway is tRNA modification; tRNA-queuosine biosynthesis. Catalyzes the base-exchange of a guanine (G) residue with the queuine precursor 7-aminomethyl-7-deazaguanine (PreQ1) at position 34 (anticodon wobble position) in tRNAs with GU(N) anticodons (tRNA-Asp, -Asn, -His and -Tyr). Catalysis occurs through a double-displacement mechanism. The nucleophile active site attacks the C1' of nucleotide 34 to detach the guanine base from the RNA, forming a covalent enzyme-RNA intermediate. The proton acceptor active site deprotonates the incoming PreQ1, allowing a nucleophilic attack on the C1' of the ribose to form the product. After dissociation, two additional enzymatic reactions on the tRNA convert PreQ1 to queuine (Q), resulting in the hypermodified nucleoside queuosine (7-(((4,5-cis-dihydroxy-2-cyclopenten-1-yl)amino)methyl)-7-deazaguanosine). The protein is Queuine tRNA-ribosyltransferase of Pseudomonas putida (strain ATCC 47054 / DSM 6125 / CFBP 8728 / NCIMB 11950 / KT2440).